The following is a 183-amino-acid chain: Ras-like protein (183 aa).

10–17 (GAGGVGKS) serves as a coordination point for GTP. The Effector region signature appears at 32-40 (YDPTIEDSY). Residues 57-61 (DTAGQ) and 116-119 (NKCD) each bind GTP.

It belongs to the small GTPase superfamily. Ras family.

Its subcellular location is the cell membrane. The catalysed reaction is GTP + H2O = GDP + phosphate + H(+). Its activity is regulated as follows. Alternates between an inactive form bound to GDP and an active form bound to GTP. Activated by a guanine nucleotide-exchange factor (GEF) and inactivated by a GTPase-activating protein (GAP). Ras proteins bind GDP/GTP and possess intrinsic GTPase activity. The polypeptide is Ras-like protein (Carassius auratus (Goldfish)).